A 127-amino-acid chain; its full sequence is Putative platinum sensitivity protein 1 (127 aa).

This chain is Putative platinum sensitivity protein 1 (PSY1), found in Saccharomyces cerevisiae (strain ATCC 204508 / S288c) (Baker's yeast).